Reading from the N-terminus, the 547-residue chain is MSSSARKLAPLPRVFVVGVGMTKFVKPGTEDARDYPDMAKEAGQKALADAQIPYSAVEQACIGYVYGDSTCGQRAVYHSLGLTGIPIINVNNNCSTGSTALFMGRQLIQGGMAECVLALGFEKMERGSLGAKFPDRTNPMDKHLDVLINKYGLSAHPVAPQMFGSAGKEHMEKYGTKIEHFAKIGWKNHKHSVNNPYSQFQKEYSLDEVMSSRPIFDFLTVLQCCPTSDGAAAAILASEEFVKKYGLQSKAVEILAQEMVTDFPSSFEEKSIIKMVGFDMSKEAARRCYEKSGLRPSDIDVIELHDCFSANELLTYEALGLCPEGKGGALVDRGDNTYGGKWVINPSGGLISKGHPLGATGLAQCAELCWQLRGEAGKRQVPGAKVALQHNLGLGGAAVVTLYKMGFPEAASSFRTHQIEAAPTSSAGDGFKANLVFKEIEKKLEEEGEQFVKKIGGIFAFKVKDGPGGKEATWVVDVKNGKGSVLPNSDKKADCTITIADSDLLALMTGKMNPQSAFFQGKLKITGNMGLAMKLQNLQLQPGKAKL.

Ser3 bears the Phosphoserine mark. Position 7 is an N6-acetyllysine (Lys7). N6-succinyllysine is present on Lys40. Lys132 is modified (N6-acetyllysine; alternate). Position 132 is an N6-succinyllysine; alternate (Lys132). Residue Lys168 is modified to N6-succinyllysine. 2 positions are modified to N6-acetyllysine: Lys173 and Lys177. Position 183 is an N6-acetyllysine; alternate (Lys183). Lys183 carries the N6-succinyllysine; alternate modification. Lys282 is subject to N6-succinyllysine. N6-acetyllysine; alternate occurs at positions 341, 432, 438, 443, and 453. N6-succinyllysine; alternate occurs at positions 341, 432, 438, 443, and 453. The region spanning 433–543 is the SCP2 domain; it reads ANLVFKEIEK…KLQNLQLQPG (111 aa). Lys464 carries the post-translational modification N6-succinyllysine. Lys470 is modified (N6-acetyllysine; alternate). Lys470 carries the N6-succinyllysine; alternate modification. Lys479 carries the post-translational modification N6-succinyllysine. Lys491 is subject to N6-acetyllysine. Residues Lys492 and Lys511 each carry the N6-succinyllysine modification. Ser516 is subject to Phosphoserine. Residues Lys522, Lys534, and Lys544 each carry the N6-succinyllysine modification. A Microbody targeting signal motif is present at residues 545–547; sequence AKL.

The protein in the N-terminal section; belongs to the thiolase-like superfamily. Thiolase family. In terms of assembly, interacts with PEX5; the interaction is essential for peroxisomal import. PreSCP2, a protein with a molecular mass of about 15 kDa, is processed into its mature form (SCP2) by proteolytic cleavage of a 20 residue leader sequence after translocation into peroxisomes.

Its subcellular location is the peroxisome. The protein resides in the cytoplasm. It is found in the mitochondrion. It localises to the endoplasmic reticulum. The enzyme catalyses choloyl-CoA + propanoyl-CoA = 3alpha,7alpha,12alpha-trihydroxy-24-oxo-5beta-cholestan-26-oyl-CoA + CoA. It catalyses the reaction an acyl-CoA + acetyl-CoA = a 3-oxoacyl-CoA + CoA. It carries out the reaction hexanoyl-CoA + acetyl-CoA = 3-oxooctanoyl-CoA + CoA. The catalysed reaction is tetradecanoyl-CoA + acetyl-CoA = 3-oxohexadecanoyl-CoA + CoA. The enzyme catalyses 3-oxohexadecanedioyl-CoA + CoA = tetradecanedioyl-CoA + acetyl-CoA. It catalyses the reaction propanoyl-CoA + tetradecanoyl-CoA = 3-oxo-2-methylhexadecanoyl-CoA + CoA. It carries out the reaction butanoyl-CoA + acetyl-CoA = 3-oxohexanoyl-CoA + CoA. The catalysed reaction is octanoyl-CoA + acetyl-CoA = 3-oxodecanoyl-CoA + CoA. The enzyme catalyses decanoyl-CoA + acetyl-CoA = 3-oxododecanoyl-CoA + CoA. It catalyses the reaction dodecanoyl-CoA + acetyl-CoA = 3-oxotetradecanoyl-CoA + CoA. It carries out the reaction hexadecanoyl-CoA + acetyl-CoA = 3-oxooctadecanoyl-CoA + CoA. The catalysed reaction is 3-oxo-(9Z-octadecenoyl)-CoA + CoA = (7Z)-hexadecenoyl-CoA + acetyl-CoA. The enzyme catalyses 7-dehydrocholesterol(in) = 7-dehydrocholesterol(out). It catalyses the reaction 4,8,12-trimethyltridecanoyl-CoA + propanoyl-CoA = 3-oxopristanoyl-CoA + CoA. In terms of biological role, plays a crucial role in the peroxisomal oxidation of branched-chain fatty acids. Catalyzes the last step of the peroxisomal beta-oxidation of branched chain fatty acids and the side chain of the bile acid intermediates di- and trihydroxycoprostanic acids (DHCA and THCA). Also active with medium and long straight chain 3-oxoacyl-CoAs. Stimulates the microsomal conversion of 7-dehydrocholesterol to cholesterol and transfers phosphatidylcholine and 7-dehydrocholesterol between membrances, in vitro. Isoforms SCP2 and SCPx cooperate in peroxisomal oxidation of certain naturally occurring tetramethyl-branched fatty acyl-CoAs. Its function is as follows. Mediates the transfer of all common phospholipids, cholesterol and gangliosides from the endoplasmic reticulum to the plasma membrane. May play a role in regulating steroidogenesis. Stimulates the microsomal conversion of 7-dehydrocholesterol to cholesterol. Also binds fatty acids and fatty acyl Coenzyme A (CoA) such as phytanoyl-CoA. Involved in the regulation phospholipid synthesis in endoplasmic reticulum enhancing the incorporation of exogenous fatty acid into glycerides. Seems to stimulate the rate-limiting step in phosphatidic acid formation mediated by GPAT3. Isoforms SCP2 and SCPx cooperate in peroxisomal oxidation of certain naturally occurring tetramethyl-branched fatty acyl-CoAs. This Oryctolagus cuniculus (Rabbit) protein is Sterol carrier protein 2 (SCP2).